The primary structure comprises 477 residues: UDP-N-acetylmuramate--L-alanine ligase (477 aa).

118–124 (GTHGKTS) provides a ligand contact to ATP.

This sequence belongs to the MurCDEF family.

The protein resides in the cytoplasm. The catalysed reaction is UDP-N-acetyl-alpha-D-muramate + L-alanine + ATP = UDP-N-acetyl-alpha-D-muramoyl-L-alanine + ADP + phosphate + H(+). Its pathway is cell wall biogenesis; peptidoglycan biosynthesis. Its function is as follows. Cell wall formation. The sequence is that of UDP-N-acetylmuramate--L-alanine ligase from Corynebacterium diphtheriae (strain ATCC 700971 / NCTC 13129 / Biotype gravis).